A 608-amino-acid chain; its full sequence is Granule-bound starch synthase 1, chloroplastic/amyloplastic (608 aa).

The transit peptide at 1–76 directs the protein to the chloroplast; that stretch reads MATITASHFV…EGGMAAGTIV (76 aa). K96 lines the ADP-alpha-D-glucose pocket.

It belongs to the glycosyltransferase 1 family. Bacterial/plant glycogen synthase subfamily.

The protein resides in the plastid. The protein localises to the chloroplast. It localises to the amyloplast. It carries out the reaction an NDP-alpha-D-glucose + [(1-&gt;4)-alpha-D-glucosyl](n) = [(1-&gt;4)-alpha-D-glucosyl](n+1) + a ribonucleoside 5'-diphosphate + H(+). Its pathway is glycan biosynthesis; starch biosynthesis. Functionally, required for the synthesis of amylose. The protein is Granule-bound starch synthase 1, chloroplastic/amyloplastic (WAXY) of Ipomoea batatas (Sweet potato).